A 405-amino-acid polypeptide reads, in one-letter code: NADH-quinone oxidoreductase subunit D (405 aa).

The protein belongs to the complex I 49 kDa subunit family. NDH-1 is composed of 14 different subunits. Subunits NuoB, C, D, E, F, and G constitute the peripheral sector of the complex.

The protein resides in the cell inner membrane. It carries out the reaction a quinone + NADH + 5 H(+)(in) = a quinol + NAD(+) + 4 H(+)(out). Its function is as follows. NDH-1 shuttles electrons from NADH, via FMN and iron-sulfur (Fe-S) centers, to quinones in the respiratory chain. The immediate electron acceptor for the enzyme in this species is believed to be ubiquinone. Couples the redox reaction to proton translocation (for every two electrons transferred, four hydrogen ions are translocated across the cytoplasmic membrane), and thus conserves the redox energy in a proton gradient. In Afipia carboxidovorans (strain ATCC 49405 / DSM 1227 / KCTC 32145 / OM5) (Oligotropha carboxidovorans), this protein is NADH-quinone oxidoreductase subunit D.